The following is a 100-amino-acid chain: Urease subunit gamma (100 aa).

It belongs to the urease gamma subunit family. In terms of assembly, heterotrimer of UreA (gamma), UreB (beta) and UreC (alpha) subunits. Three heterotrimers associate to form the active enzyme.

The protein localises to the cytoplasm. It catalyses the reaction urea + 2 H2O + H(+) = hydrogencarbonate + 2 NH4(+). Its pathway is nitrogen metabolism; urea degradation; CO(2) and NH(3) from urea (urease route): step 1/1. The polypeptide is Urease subunit gamma (Blochmanniella pennsylvanica (strain BPEN)).